The primary structure comprises 307 residues: Formate hydrogenlyase subunit 4 (307 aa).

Residues 1-2 are Periplasmic-facing; the sequence is MS. The chain crosses the membrane as a helical span at residues 3–23; sequence VLYPLIQALVLFAVAPLLSGI. Topologically, residues 24–67 are cytoplasmic; the sequence is TRVARARLHNRRGPGVLQEYRDIIKLLGRQSVGPDASGWVFRLT. A helical membrane pass occupies residues 68-88; the sequence is PYVMVGVMLTIATALPVVTVG. Topologically, residues 89–93 are periplasmic; that stretch reads SPLPQ. The chain crosses the membrane as a helical span at residues 94–114; the sequence is LGDLITLLYLFAIARFFFAIS. Residues 115–131 lie on the Cytoplasmic side of the membrane; that stretch reads GLDTGSPFTAIGASREA. A helical membrane pass occupies residues 132–152; it reads MLGVLVEPMLLLGLWVAAQVA. The Periplasmic portion of the chain corresponds to 153-167; sequence GSTNISNITDTVYHW. Residues 168–188 traverse the membrane as a helical segment; sequence PLSQSIPLVLALCACAFATFI. At 189–221 the chain is on the cytoplasmic side; that stretch reads EMGKLPFDLAEAEQELQEGPLSEYSGSGFGVMK. The helical transmembrane segment at 222-242 threads the bilayer; sequence WGISLKQLVVLQMFVGVFIPW. Residues 243–253 lie on the Periplasmic side of the membrane; that stretch reads GQMETFTAGGL. Residues 254-274 traverse the membrane as a helical segment; it reads LLALVIAIVKLVVGVLVIALF. The Cytoplasmic portion of the chain corresponds to 275 to 284; sequence ENSMARLRLD. Residues 285-305 form a helical membrane-spanning segment; it reads ITPRITWAGFGFAFLAFVSLL. Residues 306–307 are Periplasmic-facing; the sequence is AA.

Belongs to the complex I subunit 1 family. In terms of assembly, FHL comprises of a formate dehydrogenase, unidentified electron carriers and a hydrogenase (isoenzyme 3). In this non-energy conserving pathway molecular hydrogen and carbodioxide from formate are released.

The protein resides in the cell inner membrane. The polypeptide is Formate hydrogenlyase subunit 4 (hycD) (Escherichia coli (strain K12)).